Here is a 310-residue protein sequence, read N- to C-terminus: Isoflavone reductase homolog A622 (310 aa).

Residues Gly-13–Gly-19, Arg-38, and Lys-47 contribute to the NADP(+) site. The active-site Proton acceptor is the Lys-135. Arg-139 is an NADP(+) binding site.

It belongs to the NmrA-type oxidoreductase family. Isoflavone reductase subfamily. As to quaternary structure, monomer. In terms of tissue distribution, expressed in roots and stems.

It is found in the cytoplasm. Its pathway is alkaloid biosynthesis; nicotine biosynthesis. NADPH-binding protein. Involved in the biosynthesis of pyridine alkaloid natural products, leading mainly to the production of anabasine, anatabine, nicotine and nornicotine, effective deterrents against herbivores with antiparasitic and pesticide properties (neurotoxins); nornicotine serves as the precursor in the synthesis of the carcinogen compound N'-nitrosonornicotine (NNN). Reductase involved in a late step of tobacco alkaloid biosynthesis. Triggers either the formation of a nicotinic acid-derived precursor or the final condensation reaction of tobacco alkaloids. The protein is Isoflavone reductase homolog A622 of Nicotiana sylvestris (Wood tobacco).